Consider the following 340-residue polypeptide: Fructose-1,6-bisphosphatase, cytosolic (340 aa).

Positions 71, 100, 121, 123, and 124 each coordinate Mg(2+). Substrate is bound by residues 124 to 127 (DGSS), asparagine 215, tyrosine 247, tyrosine 267, and lysine 277. Residue glutamate 283 coordinates Mg(2+).

The protein belongs to the FBPase class 1 family. The cofactor is Mg(2+).

Its subcellular location is the cytoplasm. It catalyses the reaction beta-D-fructose 1,6-bisphosphate + H2O = beta-D-fructose 6-phosphate + phosphate. This is Fructose-1,6-bisphosphatase, cytosolic from Solanum tuberosum (Potato).